A 274-amino-acid chain; its full sequence is Receptor-like protein 44 (274 aa).

A signal peptide spans Met1–Ala24. Over Asp25–Lys223 the chain is Extracellular. N-linked (GlcNAc...) asparagine glycosylation is found at Asn48, Asn82, and Asn95. 4 LRR repeats span residues Cys96–Val121, Leu123–Cys144, Ala145–Leu168, and Ala169–Arg192. N-linked (GlcNAc...) asparagine glycosylation is present at Asn127. N-linked (GlcNAc...) asparagine glycosylation is found at Asn191 and Asn200. The chain crosses the membrane as a helical span at residues Gly224–Ile244. At Ser245 to Tyr274 the chain is on the cytoplasmic side.

It belongs to the RLP family.

It localises to the cell membrane. The sequence is that of Receptor-like protein 44 from Arabidopsis thaliana (Mouse-ear cress).